The primary structure comprises 525 residues: MSAATTVLAQGAAQKITPPSIEYSSLSPMLILFGVALAGVLVDAFAPPKARRVLQPLLAGAGFIGAFVAVVLLHAHRQVLAAGAVAIDGPTLFLQGTILVFALLSVLLVAERRLDSSGGALVASAAVVPGSRGSTAQRTSPDVQTEAYPLMVFSVSGMLLFVASNNLLVMFVALEILSLPLYLLCGLARRRRLLSQEAAMKYFLLGAFSSAFFLYGVAFAYGYAGSVELGRVADAVGTVGQNDTYLYLSLALLGVGLFFKIGAAPFHSWTPDVYQGAPTPITAFMAAGTKVAAFGALLRVFYVAFGGMRWDWRPVIWAVAILTMVVGAVLALTQRDIKRMLAYSAVAHAGFLLVGMAGSNIDGLRGAMFYLVTYGFTTIAAFAVVSLVRTGDGEASDLSQWQGLGRTSPLLAGTFAFLLLALAGIPLTSGFTGKFAVFQAAIAGDATPLVVVALVCSAIAAFFYVRVIVLMFFSEPLADGPVVVTRPTLTFATVGIGALMTLLLGVAPQPLLDLATTAATSGFVR.

Transmembrane regions (helical) follow at residues 26–46 (LSPMLILFGVALAGVLVDAFA), 53–73 (VLQPLLAGAGFIGAFVAVVLL), 90–110 (PTLFLQGTILVFALLSVLLVA), 143–163 (VQTEAYPLMVFSVSGMLLFVA), 167–187 (LLVMFVALEILSLPLYLLCGL), 202–222 (YFLLGAFSSAFFLYGVAFAYG), 246–266 (LYLSLALLGVGLFFKIGAAPF), 278–298 (PTPITAFMAAGTKVAAFGALL), 314–334 (PVIWAVAILTMVVGAVLALTQ), 341–361 (LAYSAVAHAGFLLVGMAGSNI), 368–388 (MFYLVTYGFTTIAAFAVVSLV), 411–431 (LAGTFAFLLLALAGIPLTSGF), 449–469 (LVVVALVCSAIAAFFYVRVIV), and 487–507 (PTLTFATVGIGALMTLLLGVA).

The protein belongs to the complex I subunit 2 family. In terms of assembly, NDH-1 is composed of 14 different subunits. Subunits NuoA, H, J, K, L, M, N constitute the membrane sector of the complex.

The protein localises to the cell membrane. The enzyme catalyses a quinone + NADH + 5 H(+)(in) = a quinol + NAD(+) + 4 H(+)(out). Functionally, NDH-1 shuttles electrons from NADH, via FMN and iron-sulfur (Fe-S) centers, to quinones in the respiratory chain. The immediate electron acceptor for the enzyme in this species is believed to be a menaquinone. Couples the redox reaction to proton translocation (for every two electrons transferred, four hydrogen ions are translocated across the cytoplasmic membrane), and thus conserves the redox energy in a proton gradient. This is NADH-quinone oxidoreductase subunit N from Parafrankia sp. (strain EAN1pec).